The primary structure comprises 189 residues: MEYKAPIGVKIDLETGVIPGAKKLVRRLSDLKGYFIDEEAYNELLREDPVVYEVYAIEQEEKDGDLNFATTVLYPGKVGKEFFFTKGHYHAKADRAEIYYAIKGKGGMLLQTPEGNAKWVPMEPGTVVYVPPYWAHRTVNTGDEPFIFLAIYPADAGHDYGSIKEKGFSKLVIEEGGEVKVVDNPKWKA.

Fe cation-binding residues include histidine 88, histidine 90, glutamate 97, and histidine 136.

It belongs to the archaeal-type GPI family. In terms of assembly, homodimer.

It localises to the cytoplasm. The catalysed reaction is alpha-D-glucose 6-phosphate = beta-D-fructose 6-phosphate. It participates in carbohydrate degradation; glycolysis; D-glyceraldehyde 3-phosphate and glycerone phosphate from D-glucose: step 2/4. This is Glucose-6-phosphate isomerase from Thermococcus onnurineus (strain NA1).